The primary structure comprises 607 residues: Rap1 GTPase-GDP dissociation stimulator 1 (607 aa).

2 ARM repeats span residues 89–131 (GLIS…DQAG) and 170–211 (DSLQ…NLAE). The interval 122–170 (EGRSAVDQAGGAQIVIDHLRSLCGRTDPASEKLMTVFCGMLMNYSNEND) is prevents binding to prenylated RHOA. Lys230 carries the N6-acetyllysine modification. ARM repeat units lie at residues 347 to 390 (DGNC…NLAI), 391 to 431 (PVVN…MLID), and 479 to 519 (SKDV…LIAA).

As to quaternary structure, interacts with RABL3. Interacts with RHOT1. Interacts with unprenylated RHOA; the interaction is direct. Interacts with RAP1A. Interacts with KRAS. Interacts with RAC1. Interacts with RAP1B. Preferentially interacts with unprenylated GTPases that will become geranylgeranylated. May also interact with prenylated GTPases. In terms of assembly, interacts with prenylated RHOA; the interaction is direct and in a 1:1 stoichiometry. Interacts with RAP1A. Interacts with KRAS. Interacts with RAC1. Interacts with RAP1B. Preferentially interacts with prenylated GTPases. Serotonylated on Gln residues by TGM2 in response to hypoxia, leading to its inactivation.

The protein resides in the cytoplasm. The protein localises to the cytosol. Its subcellular location is the endoplasmic reticulum. It is found in the mitochondrion. It localises to the nucleus. In terms of biological role, acts as a GEF (guanine nucleotide exchange factor) for the Rho family of small GTP-binding proteins (G proteins) that stimulates the dissociation of GDP to enable subsequent binding of GTP. Additionally, appears to chaperone the processing and/or trafficking of small GTPases containing a C-terminal polybasic region independently of GEF activity. Targets include RAP1A/RAP1B, RHOA, RHOB, RHOC, RAC1 and KRAS. Regulates mitochondrial dynamics by controlling RHOT function to promote mitochondrial fission during high calcium conditions. Able to promote the Ca(2+) release from the endoplasmic reticulum via both inositol trisphosphate (Ins3P) and ryanodine sensitive receptors leading to a enhanced mitochondrial Ca(2+) uptake. Functionally, acts as a GEF (guanine nucleotide exchange factor) for unprenylated RHOA. Chaperones the entry and passage of small GTPases through the prenylation pathway. Recognizes the last amino acid in the GTPase C-terminal CAAX motif with a preference for 'Leu' over 'Met', indicating involvement in the geranylgeranylation pathway. May also recognize prenylated GTPases. Acts as a GEF (guanine nucleotide exchange factor) for prenylated RHOA. Acts as a GEF for RHOC. Chaperones the downstream trafficking and/or processing of small newly prenylated GTPases. Escorts RAC1 to the nucleus. This is Rap1 GTPase-GDP dissociation stimulator 1 from Mus musculus (Mouse).